A 522-amino-acid chain; its full sequence is O-fucosyltransferase 38 (522 aa).

Residues 26-46 (AISLYLIFVFAFTIWVLVFSS) traverse the membrane as a helical; Signal-anchor for type II membrane protein segment. Over residues 54–67 (DHTKHQQQHHRDLI) the composition is skewed to basic and acidic residues. Positions 54-73 (DHTKHQQQHHRDLIDSESFP) are disordered. Asn-147 is a glycosylation site (N-linked (GlcNAc...) asparagine). 284 to 286 (HLR) provides a ligand contact to substrate. Asn-325 is a glycosylation site (N-linked (GlcNAc...) asparagine). The disordered stretch occupies residues 475–496 (HKDRQGAPRRRKGPTQGIKGRA).

This sequence belongs to the glycosyltransferase GT106 family.

The protein localises to the membrane. It functions in the pathway glycan metabolism. The protein is O-fucosyltransferase 38 of Arabidopsis thaliana (Mouse-ear cress).